Consider the following 349-residue polypeptide: Fe(3+) ions import ATP-binding protein FbpC (349 aa).

The region spanning 7 to 237 (LVLKNVTKAF…PNSLFLANFM (231 aa)) is the ABC transporter domain. 39-46 (GPSGCGKT) contacts ATP.

The protein belongs to the ABC transporter superfamily. Fe(3+) ion importer (TC 3.A.1.10) family. As to quaternary structure, the complex is composed of two ATP-binding proteins (FbpC), two transmembrane proteins (FbpB) and a solute-binding protein (FbpA).

It localises to the cell inner membrane. It carries out the reaction Fe(3+)(out) + ATP + H2O = Fe(3+)(in) + ADP + phosphate + H(+). Its function is as follows. Part of the ABC transporter complex FbpABC involved in Fe(3+) ions import. Responsible for energy coupling to the transport system. The sequence is that of Fe(3+) ions import ATP-binding protein FbpC from Pasteurella multocida (strain Pm70).